A 407-amino-acid chain; its full sequence is Na(+)-translocating NADH-quinone reductase subunit F (407 aa).

Residues 6–26 (IFLAIGMFTAIVLGLVAIILV) traverse the membrane as a helical segment. The 2Fe-2S ferredoxin-type domain occupies 35 to 127 (GDVTIQINGE…DMQIRVPEEV (93 aa)). [2Fe-2S] cluster is bound by residues Cys-70, Cys-76, Cys-79, and Cys-111. One can recognise an FAD-binding FR-type domain in the interval 130–269 (VKKWECTVES…YGPFGEFFAK (140 aa)). Residues 272-389 (EAEMVFIGGG…PMMNAAVIKM (118 aa)) form a catalytic region.

It belongs to the NqrF family. In terms of assembly, composed of six subunits; NqrA, NqrB, NqrC, NqrD, NqrE and NqrF. [2Fe-2S] cluster serves as cofactor. It depends on FAD as a cofactor.

It is found in the cell inner membrane. It carries out the reaction a ubiquinone + n Na(+)(in) + NADH + H(+) = a ubiquinol + n Na(+)(out) + NAD(+). Functionally, NQR complex catalyzes the reduction of ubiquinone-1 to ubiquinol by two successive reactions, coupled with the transport of Na(+) ions from the cytoplasm to the periplasm. The first step is catalyzed by NqrF, which accepts electrons from NADH and reduces ubiquinone-1 to ubisemiquinone by a one-electron transfer pathway. In Pseudomonas aeruginosa (strain ATCC 15692 / DSM 22644 / CIP 104116 / JCM 14847 / LMG 12228 / 1C / PRS 101 / PAO1), this protein is Na(+)-translocating NADH-quinone reductase subunit F.